A 124-amino-acid polypeptide reads, in one-letter code: Nucleoid-associated protein Noca_0318 (124 aa).

This sequence belongs to the YbaB/EbfC family. In terms of assembly, homodimer.

It localises to the cytoplasm. It is found in the nucleoid. Its function is as follows. Binds to DNA and alters its conformation. May be involved in regulation of gene expression, nucleoid organization and DNA protection. The polypeptide is Nucleoid-associated protein Noca_0318 (Nocardioides sp. (strain ATCC BAA-499 / JS614)).